The chain runs to 293 residues: Protoheme IX farnesyltransferase (293 aa).

Transmembrane regions (helical) follow at residues 9-29, 38-58, 86-106, 111-131, 137-157, 167-187, 211-231, 234-254, and 271-291; these read LIKPGIVLGNIISAISGFLLA, YIILMYMILGTTLVIASSCVL, FVKNSIIYAIILNTLGFLFLG, LLTILLTMIGFLVYIGIYSLW, IYSTIIGSISGSMPPIIGYCT, WLLFIAFSFWQIPHSYSITIF, IHMILCILIFTLANISLTVLG, SYTFLYIISIMSIFWLYTGWY, and ILSIVIITSLNVLLSLDSIFI.

This sequence belongs to the UbiA prenyltransferase family. Protoheme IX farnesyltransferase subfamily.

The protein resides in the cell inner membrane. The enzyme catalyses heme b + (2E,6E)-farnesyl diphosphate + H2O = Fe(II)-heme o + diphosphate. Its pathway is porphyrin-containing compound metabolism; heme O biosynthesis; heme O from protoheme: step 1/1. Its function is as follows. Converts heme B (protoheme IX) to heme O by substitution of the vinyl group on carbon 2 of heme B porphyrin ring with a hydroxyethyl farnesyl side group. The polypeptide is Protoheme IX farnesyltransferase (Blochmanniella floridana).